A 901-amino-acid polypeptide reads, in one-letter code: Alanine--tRNA ligase (901 aa).

Zn(2+) is bound by residues H581, H585, C684, and H688.

The protein belongs to the class-II aminoacyl-tRNA synthetase family. Requires Zn(2+) as cofactor.

It localises to the cytoplasm. The catalysed reaction is tRNA(Ala) + L-alanine + ATP = L-alanyl-tRNA(Ala) + AMP + diphosphate. Functionally, catalyzes the attachment of alanine to tRNA(Ala) in a two-step reaction: alanine is first activated by ATP to form Ala-AMP and then transferred to the acceptor end of tRNA(Ala). Also edits incorrectly charged Ser-tRNA(Ala) and Gly-tRNA(Ala) via its editing domain. This Mycobacterium ulcerans (strain Agy99) protein is Alanine--tRNA ligase.